A 102-amino-acid polypeptide reads, in one-letter code: NADH-quinone oxidoreductase subunit K 2 (102 aa).

3 helical membrane passes run 4–24 (ITPVHYLALSAALLLIGTVGV), 30–50 (IVIILMSIELILNAVNINLIA), and 62–82 (IFAIFVITDAVAEAAVGLGIL).

This sequence belongs to the complex I subunit 4L family. As to quaternary structure, NDH-1 is composed of 14 different subunits. Subunits NuoA, H, J, K, L, M, N constitute the membrane sector of the complex.

It localises to the cell inner membrane. It catalyses the reaction a quinone + NADH + 5 H(+)(in) = a quinol + NAD(+) + 4 H(+)(out). NDH-1 shuttles electrons from NADH, via FMN and iron-sulfur (Fe-S) centers, to quinones in the respiratory chain. The immediate electron acceptor for the enzyme in this species is believed to be ubiquinone. Couples the redox reaction to proton translocation (for every two electrons transferred, four hydrogen ions are translocated across the cytoplasmic membrane), and thus conserves the redox energy in a proton gradient. The chain is NADH-quinone oxidoreductase subunit K 2 from Solibacter usitatus (strain Ellin6076).